Consider the following 212-residue polypeptide: 3-demethoxyubiquinol 3-hydroxylase (212 aa).

The span at 1–14 (MTSPSSRTPRGSTP) shows a compositional bias: low complexity. The interval 1 to 22 (MTSPSSRTPRGSTPPFEPSADE) is disordered. 6 residues coordinate Fe cation: Glu58, Glu89, His92, Glu141, Glu173, and His176.

Belongs to the COQ7 family. Fe cation serves as cofactor.

Its subcellular location is the cell membrane. It catalyses the reaction a 5-methoxy-2-methyl-3-(all-trans-polyprenyl)benzene-1,4-diol + AH2 + O2 = a 3-demethylubiquinol + A + H2O. It functions in the pathway cofactor biosynthesis; ubiquinone biosynthesis. Its function is as follows. Catalyzes the hydroxylation of 2-nonaprenyl-3-methyl-6-methoxy-1,4-benzoquinol during ubiquinone biosynthesis. This chain is 3-demethoxyubiquinol 3-hydroxylase, found in Rhodospirillum rubrum (strain ATCC 11170 / ATH 1.1.1 / DSM 467 / LMG 4362 / NCIMB 8255 / S1).